Here is a 591-residue protein sequence, read N- to C-terminus: Oligopeptide-binding protein OppA (591 aa).

This sequence belongs to the bacterial solute-binding protein 5 family. As to quaternary structure, the complex is composed of an ATP-binding protein (OppD), two transmembrane proteins (OppB and OppC) and a solute-binding protein (OppA).

The protein resides in the periplasm. Part of the ABC transporter complex OppABCD involved in the uptake of oligopeptides. Peptide-binding protein that shows broad specificity but a moderate preference for hydrophobic oligopeptides and those that are 6-16 amino acids long. The chain is Oligopeptide-binding protein OppA from Mycobacterium bovis (strain ATCC BAA-935 / AF2122/97).